The sequence spans 301 residues: Phosphoribosylaminoimidazole-succinocarboxamide synthase (301 aa).

Belongs to the SAICAR synthetase family.

The enzyme catalyses 5-amino-1-(5-phospho-D-ribosyl)imidazole-4-carboxylate + L-aspartate + ATP = (2S)-2-[5-amino-1-(5-phospho-beta-D-ribosyl)imidazole-4-carboxamido]succinate + ADP + phosphate + 2 H(+). The protein operates within purine metabolism; IMP biosynthesis via de novo pathway; 5-amino-1-(5-phospho-D-ribosyl)imidazole-4-carboxamide from 5-amino-1-(5-phospho-D-ribosyl)imidazole-4-carboxylate: step 1/2. This chain is Phosphoribosylaminoimidazole-succinocarboxamide synthase (ADE1), found in Cyberlindnera jadinii (Torula yeast).